The chain runs to 562 residues: Potassium-transporting ATPase potassium-binding subunit (562 aa).

10 helical membrane-spanning segments follow: residues 5–25 (AFLLIFGLLLTVLIVAQPLGS), 63–83 (AAAILALNLIGIVVLFVLLMA), 132–152 (GLTVQNFLSAASGIAVAFALI), 175–195 (LYVLLPLSLLLALFFVSQGVL), 250–270 (LSNIVQMLAILLIPTALCFAF), 279–299 (QGHALLWAMALIFIVAAAVVM), 379–399 (GLYGMLLFVLLTVFIAGLMIG), 416–436 (MTALAILIPPALVLLGTALAL), 483–503 (VLLAVAMLLGRFAVMVPVLAI), and 526–546 (LFIGMLIAIVLLIGALTFIPA).

Belongs to the KdpA family. As to quaternary structure, the system is composed of three essential subunits: KdpA, KdpB and KdpC.

It localises to the cell inner membrane. In terms of biological role, part of the high-affinity ATP-driven potassium transport (or Kdp) system, which catalyzes the hydrolysis of ATP coupled with the electrogenic transport of potassium into the cytoplasm. This subunit binds the periplasmic potassium ions and delivers the ions to the membrane domain of KdpB through an intramembrane tunnel. This is Potassium-transporting ATPase potassium-binding subunit from Pectobacterium atrosepticum (strain SCRI 1043 / ATCC BAA-672) (Erwinia carotovora subsp. atroseptica).